An 814-amino-acid chain; its full sequence is Transcription factor oryO (814 aa).

Disordered regions lie at residues Met-1–Asn-59 and Pro-699–Pro-723. Composition is skewed to polar residues over residues Ala-16 to Asp-27 and Gln-49 to Asn-59. Residues Cys-58–Cys-85 constitute a DNA-binding region (zn(2)-C6 fungal-type). Residues Pro-713–Pro-723 are compositionally biased toward low complexity.

Its subcellular location is the nucleus. Transcription factor that regulates the expression of the gene cluster that mediates the biosynthesis of oryzines, natural products with an unusual maleidride backbone. The protein is Transcription factor oryO of Aspergillus oryzae (strain ATCC 42149 / RIB 40) (Yellow koji mold).